A 349-amino-acid polypeptide reads, in one-letter code: MHRNFRKWIFYVFLCFGVLYVKLGALSSVVALGANIICNKIPGLAPRQRAICQSRPDAIIVIGEGAQMGINECQYQFRFGRWNCSALGEKTVFGQELRVGSREAAFTYAITAAGVAHAVTAACSQGNLSNCGCDREKQGYYNQAEGWKWGGCSADVRYGIDFSRRFVDAREIKKNARRLMNLHNNEAGRKVLEDRMQLECKCHGVSGSCTTKTCWTTLPKFREVGHLLKEKYNAAVQVEVVRASRLRQPTFLRIKQLRSYQKPMETDLVYIEKSPNYCEEDAATGSVGTQGRLCNRTSPGADGCDTMCCGRGYNTHQYTKVWQCNCKFHWCCFVKCNTCSERTEVFTCK.

Residues 1-24 (MHRNFRKWIFYVFLCFGVLYVKLG) form the signal peptide. 5 disulfide bridges follow: Cys-73–Cys-84, Cys-123–Cys-131, Cys-133–Cys-152, Cys-200–Cys-214, and Cys-202–Cys-209. Asn-83 and Asn-127 each carry an N-linked (GlcNAc...) asparagine glycan. Ser-206 is lipidated: O-palmitoleoyl serine; by PORCN. A disordered linker region spans residues 238-266 (VEVVRASRLRQPTFLRIKQLRSYQKPMET). 6 disulfide bridges follow: Cys-278/Cys-309, Cys-294/Cys-304, Cys-308/Cys-348, Cys-324/Cys-339, Cys-326/Cys-336, and Cys-331/Cys-332. N-linked (GlcNAc...) asparagine glycosylation occurs at Asn-295.

This sequence belongs to the Wnt family. As to quaternary structure, forms a soluble 1:1 complex with AFM; this prevents oligomerization and is required for prolonged biological activity. The complex with AFM may represent the physiological form in body fluids. Interacts with FZD1 and FZD10. Interacts with FZD4 (in vitro). Interacts with PORCN. Interacts with glypican GPC3. Interacts (via intrinsically disordered linker region) with RECK; interaction with RECK confers ligand selectivity for Wnt7 in brain endothelial cells and allows these cells to selectively respond to Wnt7. In terms of processing, palmitoleoylation is required for efficient binding to frizzled receptors. Depalmitoleoylation leads to Wnt signaling pathway inhibition. Moderately expressed in fetal brain, weakly expressed in fetal lung and kidney, and faintly expressed in adult brain, lung and prostate.

It is found in the secreted. The protein resides in the extracellular space. The protein localises to the extracellular matrix. In terms of biological role, ligand for members of the frizzled family of seven transmembrane receptors that functions in the canonical Wnt/beta-catenin signaling pathway. Required for normal fusion of the chorion and the allantois during placenta development. Required for central nervous system (CNS) angiogenesis and blood-brain barrier regulation. The sequence is that of Protein Wnt-7b (WNT7B) from Homo sapiens (Human).